A 1189-amino-acid polypeptide reads, in one-letter code: MAAGNVNPFNVSDSEEEAEQRQDGADTERSPSDEAQGHSLGPFSPPAYSDPAALLSSNRTSPSVDGIPASAAAVSGIGAETRVSLDAIAAQLLRDQYILTALELHTELLEAGRELPRLRDYFSNPGNFERQSGTPPACKEQGVGPGGPLNRAGSISTLDSLDFARYSDDGNRESDERVAVLEFELRKAKETIQALRANLTQAAECEIASQERKNYKSSPETQEPIRPLEKRALNFLVNEYLLKNEYKLTSITFSDENDDQDFELWDDVGLNIPKPPDLLQLYRNCGNSQPLHRDTVDVAVSVDPSDLPADYFTQEPVQQTDVIQQQQQQEVVQELEYQISLLNSEKQSLAEQIKKLQSDIQALQRNVSSELTAGVKSIQSKENPKCDKPPLDNGQYLDIRGVTETDSSSDTTKTSTSTTIATDCTENSTTATQPHSKLKANGQQSKSSVQFDQPNRKLSPAFHQALLSFCRMSADSRLGSEVSRIADSEQSVMLMLGRCLPHIVPNVLLAKREELIPLILCTACLHPEPKERDQLLHILFNLIKRPDDEQRQMILTGCVAFAQHVGPTRVEAELLPQCWEQINHKYPERRLLVAEACGALAPYLPKEIRSSLVLSMLQQMLADDKADMVREAVVKSLGVIMGYIDDPDKYSQGFELMLLSLGDPSERVVSATHQVFIPAFAAWCTELGNLQSQLIPSLLTRIEKLLKQGEYGLDEHKLHMYLSALQSLIPSLFAVLLQNAPFTSRVKLQGDVPPIEVTRFPRPASPLQDVATIVGSREQLAVLLHLYDHQLQHEGTTGWDSLLWVVNQFLPQIIDIVGRINVTSSTCVHEFSRFFWRLCRTFGKIFTNTKVKPQFQEILRLSEENVDATAGNGILTKATVPIYATGVLTCYNQEEDRKLLVGFLEDVMTTLSLSHAPLDSLKASFVELGANPAYHELLLTVLWYGVVHTSALVRCTAARMFELLVKGVNETLVAQRVVPALITLSSDPEISVRISTIPAFGTIMETVTQKELLERVKMQLASFLEDPQYQDQHSLHMEIIKTFGRVGPNAEPRFRDEFVLPHLHKLALCNNQQTVESKRIDIATQLFEAYSALSCCFISEELMVNHFLPGLRCLRTDMEQLSPEHEVILSSMIKECEIKVENKGIGEAQGSISIAASLVGEDAKTKFLSKMGQLTTSGAMLANVFQRKK.

Disordered stretches follow at residues 1 to 65 (MAAG…PSVD) and 123 to 154 (SNPG…RAGS). Over residues 19 to 36 (EQRQDGADTERSPSDEAQ) the composition is skewed to basic and acidic residues. The span at 124 to 134 (NPGNFERQSGT) shows a compositional bias: polar residues. Residues 172-205 (RESDERVAVLEFELRKAKETIQALRANLTQAAEC) adopt a coiled-coil conformation. The LisH domain maps to 229–261 (EKRALNFLVNEYLLKNEYKLTSITFSDENDDQD). Positions 326–373 (QQQQEVVQELEYQISLLNSEKQSLAEQIKKLQSDIQALQRNVSSELTA) form a coiled coil. Residues 374-453 (GVKSIQSKEN…QSKSSVQFDQ (80 aa)) form a disordered region. Over residues 404 to 425 (ETDSSSDTTKTSTSTTIATDCT) the composition is skewed to low complexity. The span at 426–453 (ENSTTATQPHSKLKANGQQSKSSVQFDQ) shows a compositional bias: polar residues. HEAT repeat units lie at residues 574–612 (LLPQ…RSSL), 613–652 (VLSM…KYSQ), and 977–1015 (VVPA…LLER).

Its subcellular location is the recycling endosome. The protein localises to the golgi apparatus. It is found in the trans-Golgi network. In terms of biological role, may regulate intracellular cholesterol transport. This Danio rerio (Zebrafish) protein is RAB11-binding protein RELCH homolog (relch).